The chain runs to 453 residues: Bifunctional protein GlmU (453 aa).

The interval 1–226 is pyrophosphorylase; that stretch reads MKFSAVILAA…PIEVEGVNDR (226 aa). Residues 8–11, Lys-22, Gln-73, 78–79, 100–102, Gly-137, Glu-151, Asn-166, and Asn-224 each bind UDP-N-acetyl-alpha-D-glucosamine; these read LAAG, GT, and YGD. Asp-102 is a Mg(2+) binding site. Mg(2+) is bound at residue Asn-224. Residues 227–247 form a linker region; that stretch reads AQLARLERAFQAAQAKKLLEQ. The N-acetyltransferase stretch occupies residues 248–453; sequence GVMLRDPARF…TGWQRPVKKK (206 aa). Residues Arg-330 and Lys-348 each coordinate UDP-N-acetyl-alpha-D-glucosamine. His-360 functions as the Proton acceptor in the catalytic mechanism. UDP-N-acetyl-alpha-D-glucosamine contacts are provided by Tyr-363 and Asn-374. Residues Ala-377, 383-384, Ser-402, Ala-420, and Arg-437 each bind acetyl-CoA; that span reads NY.

It in the N-terminal section; belongs to the N-acetylglucosamine-1-phosphate uridyltransferase family. This sequence in the C-terminal section; belongs to the transferase hexapeptide repeat family. Homotrimer. Mg(2+) is required as a cofactor.

It is found in the cytoplasm. The catalysed reaction is alpha-D-glucosamine 1-phosphate + acetyl-CoA = N-acetyl-alpha-D-glucosamine 1-phosphate + CoA + H(+). It catalyses the reaction N-acetyl-alpha-D-glucosamine 1-phosphate + UTP + H(+) = UDP-N-acetyl-alpha-D-glucosamine + diphosphate. Its pathway is nucleotide-sugar biosynthesis; UDP-N-acetyl-alpha-D-glucosamine biosynthesis; N-acetyl-alpha-D-glucosamine 1-phosphate from alpha-D-glucosamine 6-phosphate (route II): step 2/2. It functions in the pathway nucleotide-sugar biosynthesis; UDP-N-acetyl-alpha-D-glucosamine biosynthesis; UDP-N-acetyl-alpha-D-glucosamine from N-acetyl-alpha-D-glucosamine 1-phosphate: step 1/1. It participates in bacterial outer membrane biogenesis; LPS lipid A biosynthesis. Catalyzes the last two sequential reactions in the de novo biosynthetic pathway for UDP-N-acetylglucosamine (UDP-GlcNAc). The C-terminal domain catalyzes the transfer of acetyl group from acetyl coenzyme A to glucosamine-1-phosphate (GlcN-1-P) to produce N-acetylglucosamine-1-phosphate (GlcNAc-1-P), which is converted into UDP-GlcNAc by the transfer of uridine 5-monophosphate (from uridine 5-triphosphate), a reaction catalyzed by the N-terminal domain. This Vibrio vulnificus (strain YJ016) protein is Bifunctional protein GlmU.